Here is a 326-residue protein sequence, read N- to C-terminus: MRVTAILTLATIAIASPTKVLNSRNELARRQATEGCSIGYCTQNGGTTGGAAGDTVTVTDLASLTEAAESETPLTIIVSGNIEGSAKIRVASDKTIYGETGSSITGVGFYIRQVSNVIMRNLKIGQVLADNGDAIGIDESTNVWVDHCDLSGDLSAGKDDLDGLLDITHAAEWVTVSNTYLHDHWKASLVGHSDSNADEDTGHLHITYANNYWYNINSRAPSIRFGTVHIINNYWDSLLGTGVNCRMDAQVLIQSSAFSNCPDEAIFFADSDYTGYAVVDDVDLGGSTNSVPEGTLTASSLPYDAIEALGSAQIAATIPETAGQKL.

A signal peptide spans 1–15 (MRVTAILTLATIAIA). The Ca(2+) site is built by Asp-133, Asp-162, and Asp-166. Arg-219 is an active-site residue.

It belongs to the polysaccharide lyase 1 family. Ca(2+) is required as a cofactor.

Its subcellular location is the secreted. It carries out the reaction Eliminative cleavage of (1-&gt;4)-alpha-D-galacturonan to give oligosaccharides with 4-deoxy-alpha-D-galact-4-enuronosyl groups at their non-reducing ends.. Its function is as follows. Pectinolytic enzyme consist of four classes of enzymes: pectin lyase, polygalacturonase, pectin methylesterase and rhamnogalacturonase. Among pectinolytic enzymes, pectin lyase is the most important in depolymerization of pectin, since it cleaves internal glycosidic bonds of highly methylated pectins. Favors pectate, the anion, over pectin, the methyl ester. This chain is Probable pectate lyase B (plyB), found in Aspergillus flavus (strain ATCC 200026 / FGSC A1120 / IAM 13836 / NRRL 3357 / JCM 12722 / SRRC 167).